The chain runs to 173 residues: Crossover junction endodeoxyribonuclease RuvC (173 aa).

Residues aspartate 8, glutamate 67, and aspartate 139 contribute to the active site. The Mg(2+) site is built by aspartate 8, glutamate 67, and aspartate 139.

The protein belongs to the RuvC family. In terms of assembly, homodimer which binds Holliday junction (HJ) DNA. The HJ becomes 2-fold symmetrical on binding to RuvC with unstacked arms; it has a different conformation from HJ DNA in complex with RuvA. In the full resolvosome a probable DNA-RuvA(4)-RuvB(12)-RuvC(2) complex forms which resolves the HJ. It depends on Mg(2+) as a cofactor.

Its subcellular location is the cytoplasm. It catalyses the reaction Endonucleolytic cleavage at a junction such as a reciprocal single-stranded crossover between two homologous DNA duplexes (Holliday junction).. The RuvA-RuvB-RuvC complex processes Holliday junction (HJ) DNA during genetic recombination and DNA repair. Endonuclease that resolves HJ intermediates. Cleaves cruciform DNA by making single-stranded nicks across the HJ at symmetrical positions within the homologous arms, yielding a 5'-phosphate and a 3'-hydroxyl group; requires a central core of homology in the junction. The consensus cleavage sequence is 5'-(A/T)TT(C/G)-3'. Cleavage occurs on the 3'-side of the TT dinucleotide at the point of strand exchange. HJ branch migration catalyzed by RuvA-RuvB allows RuvC to scan DNA until it finds its consensus sequence, where it cleaves and resolves the cruciform DNA. This is Crossover junction endodeoxyribonuclease RuvC from Psychromonas ingrahamii (strain DSM 17664 / CCUG 51855 / 37).